A 220-amino-acid chain; its full sequence is Imidazoleglycerol-phosphate dehydratase (220 aa).

Residues glutamate 14, 64–72 (HMIHALAKH), 90–94 (HHTTE), arginine 116, and arginine 138 each bind substrate. Residues histidine 64, histidine 90, histidine 91, and glutamate 94 each coordinate Mn(2+). Mn(2+) is bound by residues histidine 162, histidine 186, histidine 187, and glutamate 190. Substrate-binding positions include 186–194 (HHRSESAFK) and 214–216 (STK).

The protein belongs to the imidazoleglycerol-phosphate dehydratase family. The cofactor is Mn(2+).

The enzyme catalyses D-erythro-1-(imidazol-4-yl)glycerol 3-phosphate = 3-(imidazol-4-yl)-2-oxopropyl phosphate + H2O. It participates in amino-acid biosynthesis; L-histidine biosynthesis; L-histidine from 5-phospho-alpha-D-ribose 1-diphosphate: step 6/9. In Saccharomyces cerevisiae (strain ATCC 204508 / S288c) (Baker's yeast), this protein is Imidazoleglycerol-phosphate dehydratase.